The following is a 1097-amino-acid chain: Nitric oxide synthase-like protein (1097 aa).

Residue Cys-77 coordinates heme b. L-arginine contacts are provided by Gln-140, Trp-249, Tyr-250, Glu-254, and Asn-259. (6R)-L-erythro-5,6,7,8-tetrahydrobiopterin is bound by residues Trp-340 and Phe-353. Tyr-368 is a binding site for heme b. The tract at residues 387–410 (KRPINRKFHFKQIARAVKFTSKLF) is calmodulin-binding. Residues 420–615 (ATVLYATETG…AFRKWASSVF (196 aa)) form the Flavodoxin-like domain. FMN contacts are provided by residues 426 to 430 (TETGK) and 561 to 592 (VFALGSSAYPNFCNFGKYVDKLLVDLGGERIH). Residues 669–914 (KQFVSCTVKA…IRSAPNFHLP (246 aa)) enclose the FAD-binding FR-type domain. Residues 704 to 715 (YNPGDHVGIIAC) and 847 to 857 (LQPRFYSISSS) each bind FAD. NADP(+) is bound by residues 922–940 (ILIGPGTGIAPFRGFWHHR) and 1019–1034 (GAHFYVCGDCKMAEDV).

The protein belongs to the NOS family. Requires heme b as cofactor. FAD serves as cofactor. The cofactor is FMN.

The enzyme catalyses 2 L-arginine + 3 NADPH + 4 O2 + H(+) = 2 L-citrulline + 2 nitric oxide + 3 NADP(+) + 4 H2O. Its function is as follows. Produces nitric oxide (NO) which is a messenger molecule with diverse functions throughout the body. This Bombyx mori (Silk moth) protein is Nitric oxide synthase-like protein.